We begin with the raw amino-acid sequence, 347 residues long: Elongation factor Ts (347 aa).

The segment at 80–83 (TDFV) is involved in Mg(2+) ion dislocation from EF-Tu.

It belongs to the EF-Ts family.

The protein localises to the cytoplasm. In terms of biological role, associates with the EF-Tu.GDP complex and induces the exchange of GDP to GTP. It remains bound to the aminoacyl-tRNA.EF-Tu.GTP complex up to the GTP hydrolysis stage on the ribosome. The chain is Elongation factor Ts from Streptococcus sanguinis (strain SK36).